The sequence spans 1203 residues: Rho GTPase-activating protein gacGG (1203 aa).

RCC1 repeat units lie at residues 52–104 (TGEL…AIME), 106–148 (GLLY…VVAD), 155–204 (KRSV…AIVE), 206–255 (NEVF…ARSG), 257–298 (GNVC…VLSE), 299–359 (KGEI…EGRN), and 361–410 (LSVY…YLRG). Residues 316–343 (KLDVNSSPNINSSSGTTTPTTNTTTTTK) are disordered. Residues 320-343 (NSSPNINSSSGTTTPTTNTTTTTK) show a composition bias toward low complexity. One can recognise a Rho-GAP domain in the interval 381–594 (VDIAESMRRK…TIMKQYPLME (214 aa)). Positions 649 to 679 (TLEIKNNQNNQNNQKENNNNNNNINNSNNNN) form a coiled coil. Disordered regions lie at residues 657–725 (NNQN…TGNI), 746–789 (KDGN…NLSP), and 831–852 (FANS…LIGS). Composition is skewed to low complexity over residues 746–788 (KDGN…PNLS) and 833–852 (NSGS…LIGS). Positions 995-1078 (FDLLEKSMTE…ISNQNLSRVN (84 aa)) form a coiled coil.

The protein resides in the cytoplasm. Its function is as follows. Rho GTPase-activating protein involved in the signal transduction pathway. The protein is Rho GTPase-activating protein gacGG (gacGG) of Dictyostelium discoideum (Social amoeba).